The following is a 358-amino-acid chain: Protein FAM187B (358 aa).

A signal peptide spans 1–17 (MLATLWLVGLSLPMLWA). Topologically, residues 18-322 (QRLISCPYKN…DKADSVLRRL (305 aa)) are extracellular. Asparagine 127 carries N-linked (GlcNAc...) asparagine glycosylation. The helical transmembrane segment at 323–343 (KLMVLSISVLAVGGLLCKVVF) threads the bilayer. At 344 to 358 (RPVCGKKRSQVLLVK) the chain is on the cytoplasmic side.

The protein belongs to the FAM187 family.

It localises to the membrane. This chain is Protein FAM187B (Fam187b), found in Mus musculus (Mouse).